A 263-amino-acid polypeptide reads, in one-letter code: Phosphoribosylaminoimidazole-succinocarboxamide synthase (263 aa).

Residues 239–263 (MNENEPPKPAGPVLVSSKPDGETRH) are disordered.

Belongs to the SAICAR synthetase family.

The enzyme catalyses 5-amino-1-(5-phospho-D-ribosyl)imidazole-4-carboxylate + L-aspartate + ATP = (2S)-2-[5-amino-1-(5-phospho-beta-D-ribosyl)imidazole-4-carboxamido]succinate + ADP + phosphate + 2 H(+). It participates in purine metabolism; IMP biosynthesis via de novo pathway; 5-amino-1-(5-phospho-D-ribosyl)imidazole-4-carboxamide from 5-amino-1-(5-phospho-D-ribosyl)imidazole-4-carboxylate: step 1/2. This chain is Phosphoribosylaminoimidazole-succinocarboxamide synthase, found in Chelativorans sp. (strain BNC1).